A 458-amino-acid chain; its full sequence is Probable alpha-L-glutamate ligase (458 aa).

The interval Met-1–Gly-162 is unknown. Residues Leu-163–Glu-458 are alpha-L-glutamate ligase. The region spanning Leu-267–Glu-450 is the ATP-grasp domain. ATP is bound by residues Lys-304, Glu-341–Phe-342, Asp-350, and Arg-374–Asn-376. Mg(2+)-binding residues include Asp-411, Glu-423, and Asn-425. Mn(2+)-binding residues include Asp-411, Glu-423, and Asn-425.

In the C-terminal section; belongs to the RimK family. Mg(2+) is required as a cofactor. It depends on Mn(2+) as a cofactor.

The protein is Probable alpha-L-glutamate ligase of Shewanella halifaxensis (strain HAW-EB4).